A 172-amino-acid chain; its full sequence is Putative phosphoesterase BT9727_1129 (172 aa).

H34 functions as the Proton donor in the catalytic mechanism. 2 short sequence motifs (HXTX) span residues 34-37 (HITL) and 115-118 (HLTI). The Proton acceptor role is filled by H115.

It belongs to the 2H phosphoesterase superfamily. YjcG family.

The sequence is that of Putative phosphoesterase BT9727_1129 from Bacillus thuringiensis subsp. konkukian (strain 97-27).